The following is a 745-amino-acid chain: Prolyl oligopeptidase ophP (745 aa).

Active-site charge relay system residues include serine 580, aspartate 665, and histidine 701.

This sequence belongs to the peptidase S9A family. In terms of assembly, monomer.

The enzyme catalyses Hydrolysis of Pro-|-Xaa &gt;&gt; Ala-|-Xaa in oligopeptides.. Its pathway is mycotoxin biosynthesis. Prolyl oligopeptidase; part of the gene cluster that mediates the biosynthesis of omphalotin A, a highly methylated cyclic dodecapeptide with nematodicidal activity. Excises and catalyzes the macrocyclization of the methylated core peptide of OphMA to yield omphalotin A. OphP works in a two-step fashion with an initial cleavage at the N-terminus, followed by a second cleavage at the C-terminus of the core peptide. According to this mechanism, the free N-terminus of the core peptide, generated by the first cleavage, attacks the covalent intermediate of the second cleavage, which results in macrocyclization of the core peptide. This Omphalotus olearius (Jack o'lantern) protein is Prolyl oligopeptidase ophP.